The sequence spans 382 residues: Chaperone protein DnaJ (382 aa).

The region spanning 5–70 is the J domain; that stretch reads DYYEVLGLQK…QKRAAYDQYG (66 aa). The CR-type zinc-finger motif lies at 134-212; it reads GTTKDIQINT…CHGEGRVHKK (79 aa). Zn(2+) contacts are provided by cysteine 147, cysteine 150, cysteine 164, cysteine 167, cysteine 186, cysteine 189, cysteine 200, and cysteine 203. CXXCXGXG motif repeat units follow at residues 147-154, 164-171, 186-193, and 200-207; these read CDSCGGSG, CPHCHGSG, CPTCHGSG, and CRNCHGEG.

This sequence belongs to the DnaJ family. Homodimer. Zn(2+) is required as a cofactor.

It localises to the cytoplasm. In terms of biological role, participates actively in the response to hyperosmotic and heat shock by preventing the aggregation of stress-denatured proteins and by disaggregating proteins, also in an autonomous, DnaK-independent fashion. Unfolded proteins bind initially to DnaJ; upon interaction with the DnaJ-bound protein, DnaK hydrolyzes its bound ATP, resulting in the formation of a stable complex. GrpE releases ADP from DnaK; ATP binding to DnaK triggers the release of the substrate protein, thus completing the reaction cycle. Several rounds of ATP-dependent interactions between DnaJ, DnaK and GrpE are required for fully efficient folding. Also involved, together with DnaK and GrpE, in the DNA replication of plasmids through activation of initiation proteins. This chain is Chaperone protein DnaJ, found in Haemophilus influenzae (strain ATCC 51907 / DSM 11121 / KW20 / Rd).